An 816-amino-acid polypeptide reads, in one-letter code: Leucine--tRNA ligase (816 aa).

The short motif at 46 to 56 (PYPSGALHMGH) is the 'HIGH' region element. The 'KMSKS' region motif lies at 638 to 642 (KMSKS). An ATP-binding site is contributed by Lys-641.

The protein belongs to the class-I aminoacyl-tRNA synthetase family.

Its subcellular location is the cytoplasm. It carries out the reaction tRNA(Leu) + L-leucine + ATP = L-leucyl-tRNA(Leu) + AMP + diphosphate. In Xanthomonas campestris pv. campestris (strain ATCC 33913 / DSM 3586 / NCPPB 528 / LMG 568 / P 25), this protein is Leucine--tRNA ligase.